The sequence spans 195 residues: Guanylate kinase (195 aa).

One can recognise a Guanylate kinase-like domain in the interval glycine 12–leucine 191. Residue glycine 19–glycine 26 coordinates ATP.

It belongs to the guanylate kinase family.

The protein resides in the cytoplasm. The enzyme catalyses GMP + ATP = GDP + ADP. Functionally, essential for recycling GMP and indirectly, cGMP. This is Guanylate kinase (gmk) from Mycoplasmoides gallisepticum (strain R(low / passage 15 / clone 2)) (Mycoplasma gallisepticum).